We begin with the raw amino-acid sequence, 318 residues long: Ferrochelatase (318 aa).

Positions 186 and 264 each coordinate Fe cation.

Belongs to the ferrochelatase family.

The protein resides in the cytoplasm. It carries out the reaction heme b + 2 H(+) = protoporphyrin IX + Fe(2+). The protein operates within porphyrin-containing compound metabolism; protoheme biosynthesis; protoheme from protoporphyrin-IX: step 1/1. In terms of biological role, catalyzes the ferrous insertion into protoporphyrin IX. The sequence is that of Ferrochelatase from Chlamydia caviae (strain ATCC VR-813 / DSM 19441 / 03DC25 / GPIC) (Chlamydophila caviae).